A 169-amino-acid chain; its full sequence is Transcription antitermination protein NusB (169 aa).

The tract at residues 150-169 (AAATSRRTETAGGESNDAGS) is disordered.

This sequence belongs to the NusB family.

Functionally, involved in transcription antitermination. Required for transcription of ribosomal RNA (rRNA) genes. Binds specifically to the boxA antiterminator sequence of the ribosomal RNA (rrn) operons. This chain is Transcription antitermination protein NusB, found in Rhodococcus jostii (strain RHA1).